The chain runs to 384 residues: Glutamate 5-kinase (384 aa).

K24 is a binding site for ATP. Substrate is bound by residues S64, D149, and N161. ATP contacts are provided by residues 181 to 182 (TD) and 223 to 229 (TGGMRTK). The 83-residue stretch at 288 to 370 (PGAILIDAGA…RDIQPLLGYT (83 aa)) folds into the PUA domain.

It belongs to the glutamate 5-kinase family.

The protein localises to the cytoplasm. It catalyses the reaction L-glutamate + ATP = L-glutamyl 5-phosphate + ADP. It functions in the pathway amino-acid biosynthesis; L-proline biosynthesis; L-glutamate 5-semialdehyde from L-glutamate: step 1/2. Its function is as follows. Catalyzes the transfer of a phosphate group to glutamate to form L-glutamate 5-phosphate. This is Glutamate 5-kinase from Xylella fastidiosa (strain 9a5c).